Consider the following 861-residue polypeptide: Leucine--tRNA ligase (861 aa).

The 'HIGH' region signature appears at P42–H52. A 'KMSKS' region motif is present at residues K619–S623. K622 serves as a coordination point for ATP.

This sequence belongs to the class-I aminoacyl-tRNA synthetase family.

It is found in the cytoplasm. The catalysed reaction is tRNA(Leu) + L-leucine + ATP = L-leucyl-tRNA(Leu) + AMP + diphosphate. The sequence is that of Leucine--tRNA ligase from Haemophilus influenzae (strain ATCC 51907 / DSM 11121 / KW20 / Rd).